The following is a 127-amino-acid chain: Glycine cleavage system H protein (127 aa).

In terms of domain architecture, Lipoyl-binding spans 24–105 (TALVGITDFA…YGSGWMVKMK (82 aa)). N6-lipoyllysine is present on Lys65.

This sequence belongs to the GcvH family. As to quaternary structure, the glycine cleavage system is composed of four proteins: P, T, L and H. (R)-lipoate serves as cofactor.

Functionally, the glycine cleavage system catalyzes the degradation of glycine. The H protein shuttles the methylamine group of glycine from the P protein to the T protein. The polypeptide is Glycine cleavage system H protein (Chlorobium luteolum (strain DSM 273 / BCRC 81028 / 2530) (Pelodictyon luteolum)).